Reading from the N-terminus, the 566-residue chain is Bacillolysin (566 aa).

The N-terminal stretch at 1 to 27 is a signal peptide; it reads MKKKSLALVLATGMAVTTFGGTGSAFA. The propeptide at 28-249 is activation peptide; sequence DSKNVLSTKK…KQDAKAVVKP (222 aa). Ca(2+) is bound by residues aspartate 307, aspartate 309, valine 311, and aspartate 388. Histidine 392 provides a ligand contact to Zn(2+). Residue glutamate 393 is part of the active site. Residues histidine 396 and glutamate 416 each contribute to the Zn(2+) site. Ca(2+) is bound by residues glutamate 427, asparagine 433, aspartate 435, glutamate 437, glutamate 440, tyrosine 443, threonine 444, lysine 447, and aspartate 450. Histidine 481 acts as the Proton donor in catalysis.

The protein belongs to the peptidase M4 family. The cofactor is Ca(2+). It depends on Zn(2+) as a cofactor.

The protein resides in the secreted. The catalysed reaction is Similar, but not identical, to that of thermolysin.. Functionally, extracellular zinc metalloprotease. The protein is Bacillolysin (npr) of Bacillus cereus.